The chain runs to 110 residues: Large ribosomal subunit protein uL22 (110 aa).

It belongs to the universal ribosomal protein uL22 family. In terms of assembly, part of the 50S ribosomal subunit.

In terms of biological role, this protein binds specifically to 23S rRNA; its binding is stimulated by other ribosomal proteins, e.g. L4, L17, and L20. It is important during the early stages of 50S assembly. It makes multiple contacts with different domains of the 23S rRNA in the assembled 50S subunit and ribosome. Functionally, the globular domain of the protein is located near the polypeptide exit tunnel on the outside of the subunit, while an extended beta-hairpin is found that lines the wall of the exit tunnel in the center of the 70S ribosome. This is Large ribosomal subunit protein uL22 from Enterobacter sp. (strain 638).